Here is a 241-residue protein sequence, read N- to C-terminus: Zinc finger CCHC domain-containing protein 17 (241 aa).

The S1 motif domain maps to 16–88 (YTIFQGEVAM…DRIKVSLSMK (73 aa)). Serine 114 bears the Phosphoserine mark. The CCHC-type zinc finger occupies 131–148 (TTCKKCGCKGHFAKDCFM). An N6-acetyllysine modification is found at lysine 144. A disordered region spans residues 160–241 (EEEEEKEEAK…KKKHKKKHKE (82 aa)). A compositionally biased stretch (basic and acidic residues) spans 166–178 (EEAKAEGLEKPDP). Basic residues predominate over residues 182–198 (SSRKRKKEKKKKKHRDR). Serine 183 is subject to Phosphoserine. Residues 211-225 (DTGKKARHSSKDSKA) show a composition bias toward basic and acidic residues. Over residues 226-241 (TKKKKKKKKHKKKHKE) the composition is skewed to basic residues.

Interacts with PNN. Associates with the 60S ribosomal subunit. As to expression, expressed in liver, brain, heart, kidney testis, stomach, small intestine, skin, thymus, uterus, placenta, spleen, lung and skeletal muscle.

It is found in the nucleus. The protein resides in the nucleolus. The sequence is that of Zinc finger CCHC domain-containing protein 17 (Zcchc17) from Mus musculus (Mouse).